Here is a 194-residue protein sequence, read N- to C-terminus: Putative manganese efflux pump MntP (194 aa).

The next 6 helical transmembrane spans lie at 3 to 23, 37 to 57, 69 to 89, 110 to 132, 147 to 167, and 172 to 192; these read PFSI…AAIG, LRAG…GWLL, DHWI…VAGL, LGLA…SLAF, CTFS…NLIG, and MLGG…HLSG.

This sequence belongs to the MntP (TC 9.B.29) family.

The protein resides in the cell inner membrane. Probably functions as a manganese efflux pump. This chain is Putative manganese efflux pump MntP, found in Xanthomonas euvesicatoria pv. vesicatoria (strain 85-10) (Xanthomonas campestris pv. vesicatoria).